The following is a 591-amino-acid chain: Asparagine synthetase [glutamine-hydrolyzing] 2 (591 aa).

Residue Cys-2 is the For GATase activity of the active site. Residues 2 to 185 (CGILAVLGVA…PGHLYSSKTG (184 aa)) form the Glutamine amidotransferase type-2 domain. L-glutamine contacts are provided by residues 50 to 54 (RLAIV), 75 to 77 (NGE), and Asp-98. The Asparagine synthetase domain maps to 193–516 (PPWFSESIPS…PKNAARLTVP (324 aa)). ATP is bound by residues Leu-231, Ile-267, and 341-342 (SG).

As to expression, expressed in companion cells of leaf sheath vascular bundles, and phloem-parenchyma cells, nucellar projections and nucellar epidermis of dorsal vascular bundles of grains.

The catalysed reaction is L-aspartate + L-glutamine + ATP + H2O = L-asparagine + L-glutamate + AMP + diphosphate + H(+). Its pathway is amino-acid biosynthesis; L-asparagine biosynthesis; L-asparagine from L-aspartate (L-Gln route): step 1/1. In terms of biological role, essential for nitrogen assimilation, distribution and remobilization within the plant via the phloem. This is Asparagine synthetase [glutamine-hydrolyzing] 2 from Oryza sativa subsp. japonica (Rice).